The sequence spans 296 residues: Maltose/maltodextrin transport system permease protein MalG (296 aa).

Over 1 to 12 (MAMVQGKSLKYR) the chain is Cytoplasmic. A helical transmembrane segment spans residues 13–35 (VWATHIALWAFLSMIIFPLLMIV). The Periplasmic portion of the chain corresponds to 36–88 (AISFREGNFATGSLIPDNPSLEHWKLALGFSVTNADGSVTPPPFPVLTWLWNS). The 197-residue stretch at 85 to 281 (LWNSVKVAGI…LPITIVFLLA (197 aa)) folds into the ABC transmembrane type-1 domain. A helical transmembrane segment spans residues 89-111 (VKVAGITSILIVALSTTSAYAFA). Residues 112-123 (RLRFKGKETILK) lie on the Cytoplasmic side of the membrane. The helical transmembrane segment at 124 to 143 (AMMIFQMFPAVLALVALYAL) threads the bilayer. At 144–152 (FDKLGQYIP) the chain is on the periplasmic side. The helical transmembrane segment at 153–175 (FLGLNTHGGLIFSYLGGIALHVW) threads the bilayer. The Cytoplasmic portion of the chain corresponds to 176-204 (TIKGYFETIDNSLEEAAALDGATPWQAFR). The helical transmembrane segment at 205–227 (LVLLPLSVPILAVVFILSFIGVV) threads the bilayer. Residues 228 to 257 (GEVPVASLLLSDVNSYTLAVGMQQYLYPQN) lie on the Periplasmic side of the membrane. The chain crosses the membrane as a helical span at residues 258 to 280 (YLWGDFAAAAVLSALPITIVFLL). The Cytoplasmic portion of the chain corresponds to 281-296 (AQRWLVGGLTAGGVKG).

It belongs to the binding-protein-dependent transport system permease family. MalFG subfamily. The complex is composed of two ATP-binding proteins (MalK), two transmembrane proteins (MalG and MalF) and a solute-binding protein (MalE).

The protein localises to the cell inner membrane. Its function is as follows. Part of the ABC transporter complex MalEFGK involved in maltose/maltodextrin import. Probably responsible for the translocation of the substrate across the membrane. This chain is Maltose/maltodextrin transport system permease protein MalG (malG), found in Vibrio vulnificus (strain CMCP6).